The following is a 547-amino-acid chain: Type I inositol polyphosphate 5-phosphatase 4 (547 aa).

Residues 56–67 show a composition bias toward basic and acidic residues; the sequence is CSVRKSKTETRS. The interval 56–80 is disordered; it reads CSVRKSKTETRSKRNSGRARRNKLD. Catalytic regions lie at residues 387-402 and 467-482; these read DRVI…IALS and KRRT…WHGS.

The protein belongs to the inositol polyphosphate 5-phosphatase family.

The protein is Type I inositol polyphosphate 5-phosphatase 4 of Arabidopsis thaliana (Mouse-ear cress).